The sequence spans 260 residues: Global transcriptional regulator CodY (260 aa).

The GAF domain stretch occupies residues 1–159 (MPNLLEKTRK…SSTVVGIQLL (159 aa)). The segment at residues 207-226 (ASVIADRIGITRSVIVNALR) is a DNA-binding region (H-T-H motif).

The protein belongs to the CodY family.

Its subcellular location is the cytoplasm. DNA-binding global transcriptional regulator which is involved in the adaptive response to starvation and acts by directly or indirectly controlling the expression of numerous genes in response to nutrient availability. During rapid exponential growth, CodY is highly active and represses genes whose products allow adaptation to nutrient depletion. The sequence is that of Global transcriptional regulator CodY from Streptococcus equi subsp. zooepidemicus (strain H70).